A 343-amino-acid chain; its full sequence is Ferrochelatase (343 aa).

Fe cation contacts are provided by histidine 211 and glutamate 292.

This sequence belongs to the ferrochelatase family.

It is found in the cytoplasm. The enzyme catalyses heme b + 2 H(+) = protoporphyrin IX + Fe(2+). It functions in the pathway porphyrin-containing compound metabolism; protoheme biosynthesis; protoheme from protoporphyrin-IX: step 1/1. Its function is as follows. Catalyzes the ferrous insertion into protoporphyrin IX. This chain is Ferrochelatase, found in Gluconobacter oxydans (strain 621H) (Gluconobacter suboxydans).